The primary structure comprises 592 residues: Frizzled-9 (592 aa).

Residues 1–23 (MAVPPLLRGALLLWQLLATGGAA) form the signal peptide. Residues 24–230 (LEIGRFDPER…EVFWSRRDKD (207 aa)) are Extracellular-facing. In terms of domain architecture, FZ spans 35–156 (RGPAPCQAME…NDPHALCMEA (122 aa)). Cystine bridges form between cysteine 40–cysteine 101, cysteine 48–cysteine 94, cysteine 85–cysteine 123, cysteine 112–cysteine 153, and cysteine 116–cysteine 140. Asparagine 54 carries N-linked (GlcNAc...) asparagine glycosylation. A required for Wnt-activated receptor activity region spans residues 59-173 (PNLLGHTSQG…PTEPHKGLGM (115 aa)). An N-linked (GlcNAc...) asparagine glycan is attached at asparagine 159. Residues 231 to 251 (FALVWMAVWSALCFFSTAFTV) traverse the membrane as a helical segment. Over 252-267 (FTFLLEPHRFQYPERP) the chain is Cytoplasmic. The chain crosses the membrane as a helical span at residues 268-288 (IIFLSMCYNVYSLAFLIRAVA). Residues 289–316 (GAQSVACDQEAGALYVIQEGLENTGCTL) are Extracellular-facing. The chain crosses the membrane as a helical span at residues 317 to 337 (VFLLLYYFGMASSLWWVVLTL). The Cytoplasmic portion of the chain corresponds to 338 to 356 (TWFLAAGKKWGHEAIEAHG). The chain crosses the membrane as a helical span at residues 357-377 (SYFHMAAWGLPALKTIVVLTL). The Extracellular segment spans residues 378-401 (RKVAGDELTGLCYVASMDPAALTG). The helical transmembrane segment at 402–422 (FVLVPLSCYLVLGTSFLLTGF) threads the bilayer. The Cytoplasmic portion of the chain corresponds to 423 to 448 (VALFHIRKIMKTGGTNTEKLEKLMVK). Residues 449–469 (IGVFSILYTVPATCVIVCYVY) traverse the membrane as a helical segment. Residues 470-509 (ERLNMDFWRLRATEQPCTAATVPGGRRDCSLPGGSVPTVA) are Extracellular-facing. The chain crosses the membrane as a helical span at residues 510–530 (VFMLKIFMSLVVGITSGVWVW). Residues 531–592 (SSKTFQTWQS…DPSLENPTHL (62 aa)) are Cytoplasmic-facing. A Lys-Thr-X-X-X-Trp motif, mediates interaction with the PDZ domain of Dvl family members motif is present at residues 533–538 (KTFQTW). Residues 555–592 (ACRTPGGYGRGTHCHYKAPTVVLHMTKTDPSLENPTHL) are required for CTNNB1 accumulation and TCF transcription factor activity.

The protein belongs to the G-protein coupled receptor Fz/Smo family. Post-translationally, ubiquitinated by ZNRF3, leading to its degradation by the proteasome. In terms of tissue distribution, in the embryo, found in the neural tube, trunk skeletal muscle precursors (myotomes), limb skeletal anlagen, craniofacial regions and nephric ducts. In the adult, expression is abundant in heart, brain, testis and skeletal muscle. In the testis, expressed in all spermatogenic cell types. Lower levels in adult lung, liver and kidney. Barely detectable in spleen. Expressed also in chondrocytes.

It is found in the cell membrane. In terms of biological role, receptor for WNT2 that is coupled to the beta-catenin canonical signaling pathway, which leads to the activation of disheveled proteins, inhibition of GSK-3 kinase, nuclear accumulation of beta-catenin and activation of Wnt target genes. Plays a role in neuromuscular junction (NMJ) assembly by negatively regulating the clustering of acetylcholine receptors (AChR) through the beta-catenin canonical signaling pathway. May play a role in neural progenitor cells (NPCs) viability through the beta-catenin canonical signaling pathway by negatively regulating cell cycle arrest leading to inhibition of neuron apoptotic process. During hippocampal development, regulates neuroblast proliferation and apoptotic cell death. Controls bone formation through non canonical Wnt signaling mediated via ISG15. Positively regulates bone regeneration through non canonical Wnt signaling. The chain is Frizzled-9 (Fzd9) from Mus musculus (Mouse).